Consider the following 219-residue polypeptide: tRNA (guanine-N(7)-)-methyltransferase (219 aa).

Residues Glu44, Asp69, Glu102, and Asn125 each contribute to the S-adenosyl-L-methionine site. 2 residues coordinate substrate: Lys129 and Asp161.

The protein belongs to the class I-like SAM-binding methyltransferase superfamily. TrmB family.

The enzyme catalyses guanosine(46) in tRNA + S-adenosyl-L-methionine = N(7)-methylguanosine(46) in tRNA + S-adenosyl-L-homocysteine. It participates in tRNA modification; N(7)-methylguanine-tRNA biosynthesis. In terms of biological role, catalyzes the formation of N(7)-methylguanine at position 46 (m7G46) in tRNA. In Clostridium perfringens (strain SM101 / Type A), this protein is tRNA (guanine-N(7)-)-methyltransferase.